The chain runs to 446 residues: Maltoporin (446 aa).

Residues 1-25 (MMITLRKLPLAVAVAAGVMSAQAMA) form the signal peptide.

It belongs to the porin LamB (TC 1.B.3) family. In terms of assembly, homotrimer formed of three 18-stranded antiparallel beta-barrels, containing three independent channels.

It localises to the cell outer membrane. The enzyme catalyses beta-maltose(in) = beta-maltose(out). Functionally, involved in the transport of maltose and maltodextrins. The protein is Maltoporin of Escherichia coli O8 (strain IAI1).